Here is a 92-residue protein sequence, read N- to C-terminus: Small ribosomal subunit protein uS19 (92 aa).

The protein belongs to the universal ribosomal protein uS19 family.

Its function is as follows. Protein S19 forms a complex with S13 that binds strongly to the 16S ribosomal RNA. The chain is Small ribosomal subunit protein uS19 from Klebsiella pneumoniae (strain 342).